The following is a 123-amino-acid chain: Large-conductance mechanosensitive channel (123 aa).

A run of 2 helical transmembrane segments spans residues 14–34 and 67–87; these read VLDLAVGVIIGSAFTGLVTSL and GNFINDVLNFLIIAFVVFLLV.

This sequence belongs to the MscL family. As to quaternary structure, homopentamer.

Its subcellular location is the cell membrane. In terms of biological role, channel that opens in response to stretch forces in the membrane lipid bilayer. May participate in the regulation of osmotic pressure changes within the cell. This chain is Large-conductance mechanosensitive channel, found in Lacticaseibacillus casei (strain BL23) (Lactobacillus casei).